The sequence spans 375 residues: DNA replication and repair protein RecF (375 aa).

Position 30 to 37 (30 to 37 (GDNAQGKS)) interacts with ATP.

Belongs to the RecF family.

It is found in the cytoplasm. In terms of biological role, the RecF protein is involved in DNA metabolism; it is required for DNA replication and normal SOS inducibility. RecF binds preferentially to single-stranded, linear DNA. It also seems to bind ATP. This is DNA replication and repair protein RecF from Gloeobacter violaceus (strain ATCC 29082 / PCC 7421).